The primary structure comprises 206 residues: Carbonic anhydrase (206 aa).

Residue Lys11 forms an Isoglutamyl lysine isopeptide (Lys-Gln) (interchain with Q-Cter in protein Pup) linkage. The Zn(2+) site is built by Cys51, Asp53, His104, and Cys107.

The protein belongs to the beta-class carbonic anhydrase family. Homotetramer. It depends on Zn(2+) as a cofactor.

It catalyses the reaction hydrogencarbonate + H(+) = CO2 + H2O. Its function is as follows. Catalyzes the reversible hydration of carbon dioxide to form bicarbonate. This is Carbonic anhydrase (cynT) from Mycolicibacterium smegmatis (strain ATCC 700084 / mc(2)155) (Mycobacterium smegmatis).